The sequence spans 684 residues: Probable phosphoenolpyruvate synthase (684 aa).

Residue H424 is the Tele-phosphohistidine intermediate of the active site. Substrate is bound by residues R517, R564, and E661. Residue E661 participates in Mg(2+) binding.

The protein belongs to the PEP-utilizing enzyme family. It depends on Mg(2+) as a cofactor.

The enzyme catalyses pyruvate + ATP + H2O = phosphoenolpyruvate + AMP + phosphate + 2 H(+). It functions in the pathway carbohydrate biosynthesis; gluconeogenesis. Catalyzes the phosphorylation of pyruvate to phosphoenolpyruvate. The chain is Probable phosphoenolpyruvate synthase (ppsA) from Methanothermobacter thermautotrophicus (strain ATCC 29096 / DSM 1053 / JCM 10044 / NBRC 100330 / Delta H) (Methanobacterium thermoautotrophicum).